The following is a 433-amino-acid chain: Ligand-dependent corepressor (433 aa).

Residues methionine 1–proline 51 are disordered. The span at threonine 13–proline 34 shows a compositional bias: polar residues. Positions alanine 36 to threonine 48 are enriched in low complexity. A Phosphoserine modification is found at serine 42. Residues leucine 53–leucine 57 carry the Interaction with nuclear receptors motif. Serine 63 is subject to Phosphoserine. Residues proline 64–threonine 147 are disordered. Polar residues predominate over residues alanine 93–asparagine 110. A Phosphoserine modification is found at serine 249. Lysine 254 participates in a covalent cross-link: Glycyl lysine isopeptide (Lys-Gly) (interchain with G-Cter in SUMO2). The segment at glutamine 299 to glutamine 348 is disordered. Polar residues predominate over residues alanine 316–aspartate 329. The short motif at proline 339–arginine 345 is the Nuclear localization signal element. The region spanning arginine 340 to threonine 392 is the HTH psq-type domain. Arginine 345 is covalently cross-linked (Glycyl lysine isopeptide (Lys-Gly) (interchain with G-Cter in SUMO2)). The H-T-H motif DNA-binding region spans valine 368–glutamate 388. Residue glycine 391 forms a Glycyl lysine isopeptide (Lys-Gly) (interchain with G-Cter in SUMO2) linkage. The interval leucine 393 to serine 412 is disordered. Lysine 414 is covalently cross-linked (Glycyl lysine isopeptide (Lys-Gly) (interchain with G-Cter in SUMO2)).

In terms of assembly, interacts with ESR1 and ESR2 in the presence of estradiol. Interacts with CTBP1, HDAC3 and HDAC6. Component of a large corepressor complex that contains about 20 proteins, including CTBP1, CTBP2, HDAC1 and HDAC2. As to expression, ubiquitous.

Its subcellular location is the nucleus. May act as transcription activator that binds DNA elements with the sequence 5'-CCCTATCGATCGATCTCTACCT-3'. Repressor of ligand-dependent transcription activation by target nuclear receptors. Repressor of ligand-dependent transcription activation by ESR1, ESR2, NR3C1, PGR, RARA, RARB, RARG, RXRA and VDR. The chain is Ligand-dependent corepressor from Homo sapiens (Human).